We begin with the raw amino-acid sequence, 257 residues long: NAD kinase (257 aa).

Asp46 serves as the catalytic Proton acceptor. NAD(+) contacts are provided by residues 46 to 47 (DG), 116 to 117 (NE), Asp146, Ala154, and 157 to 162 (TAYNLS).

Belongs to the NAD kinase family. A divalent metal cation serves as cofactor.

The protein resides in the cytoplasm. The catalysed reaction is NAD(+) + ATP = ADP + NADP(+) + H(+). Involved in the regulation of the intracellular balance of NAD and NADP, and is a key enzyme in the biosynthesis of NADP. Catalyzes specifically the phosphorylation on 2'-hydroxyl of the adenosine moiety of NAD to yield NADP. The sequence is that of NAD kinase from Mesorhizobium japonicum (strain LMG 29417 / CECT 9101 / MAFF 303099) (Mesorhizobium loti (strain MAFF 303099)).